Reading from the N-terminus, the 470-residue chain is Calcitonin gene-related peptide type 1 receptor (470 aa).

Positions 1-23 (MTASCWTICLFLLGSVTEFIVLA) are cleaved as a signal peptide. The Extracellular portion of the chain corresponds to 24 to 147 (SPEVNESQQQ…HTTEGRRTAM (124 aa)). N-linked (GlcNAc...) asparagine glycosylation is found at Asn28, Asn74, Asn126, and Asn131. Cystine bridges form between Cys56/Cys82, Cys73/Cys113, and Cys96/Cys135. Residues 148 to 172 (NLFYLALIGHGLSLTSLFISLGIFF) traverse the membrane as a helical segment. Residues 173-183 (HFKSLSCQRIT) lie on the Cytoplasmic side of the membrane. The chain crosses the membrane as a helical span at residues 184–206 (LHKNLFFSFVLNSIITIIWLTAV). At 207–217 (ANNQELVQQNP) the chain is on the extracellular side. The chain crosses the membrane as a helical span at residues 218 to 246 (ISCKISQFIHLYIFGCNYFWMLCEGIYLH). Residues 247–260 (TLIVVAVFAEKQHL) lie on the Cytoplasmic side of the membrane. A helical transmembrane segment spans residues 261-281 (MWYYLLGWGFPLIPATIHAVA). Residues 282–297 (RSYYYNDNCWISSNTS) are Extracellular-facing. Residue Asn295 is glycosylated (N-linked (GlcNAc...) asparagine). The chain crosses the membrane as a helical span at residues 298–322 (LLYIIHGPICAAMLVNLFFLLNIVR). The Cytoplasmic segment spans residues 323 to 337 (VLITKLKVTHQAKSS). Residues 338–359 (LYMKAVRATLILVPLLGIQYVL) traverse the membrane as a helical segment. The Extracellular segment spans residues 360–374 (LPYKPSGRVSAEIYD). The helical transmembrane segment at 375-395 (YIMHILMHYQGLLVATIFCFF) threads the bilayer. Topologically, residues 396–470 (NGEVQAVLRR…AIIKPENPFA (75 aa)) are cytoplasmic.

The protein belongs to the G-protein coupled receptor 2 family.

The protein localises to the cell membrane. Its function is as follows. May function as G protein-coupled receptor for calcitonin-gene-related peptides and adrenomedullin. Specificity may be modulated by accessory proteins. May activate cAMP-dependent pathway. This Danio rerio (Zebrafish) protein is Calcitonin gene-related peptide type 1 receptor (calcrla).